We begin with the raw amino-acid sequence, 158 residues long: Ribosomal RNA large subunit methyltransferase H (158 aa).

S-adenosyl-L-methionine-binding positions include Leu74, Gly105, and 124-129 (LGPLTL).

It belongs to the RNA methyltransferase RlmH family. As to quaternary structure, homodimer.

Its subcellular location is the cytoplasm. The catalysed reaction is pseudouridine(1915) in 23S rRNA + S-adenosyl-L-methionine = N(3)-methylpseudouridine(1915) in 23S rRNA + S-adenosyl-L-homocysteine + H(+). In terms of biological role, specifically methylates the pseudouridine at position 1915 (m3Psi1915) in 23S rRNA. This Xylella fastidiosa (strain Temecula1 / ATCC 700964) protein is Ribosomal RNA large subunit methyltransferase H.